A 646-amino-acid polypeptide reads, in one-letter code: A-kinase anchor protein 8-like (646 aa).

Residues 1–268 (MSYTGFVQGS…MRRTWKTWTT (268 aa)) are sufficient for activation of CTE-mediated expression. An Asymmetric dimethylarginine; alternate modification is found at Arg-208. An Omega-N-methylarginine; alternate modification is found at Arg-208. Omega-N-methylarginine is present on residues Arg-217, Arg-237, and Arg-247. Lys-257 carries the N6-acetyllysine modification. The tract at residues 264-381 (KTWTTADFRT…QDKQKKRQRD (118 aa)) is disordered. A Phosphothreonine modification is found at Thr-267. The Nuclear localization signal motif lies at 274–279 (KKKKRK). Residues 280-296 (QGGSPDEPDSKATRTDC) carry the Nuclear export signal (NES) motif. Ser-283 is modified (phosphoserine). Positions 287–296 (PDSKATRTDC) are enriched in basic and acidic residues. Thr-292 bears the Phosphothreonine mark. Residue Ser-297 is modified to Phosphoserine. Positions 298–314 (DNSDSDNDEGTEGEATE) are enriched in acidic residues. Residues 337–349 (EDGREEGKEDPEK) show a composition bias toward basic and acidic residues. The Nuclear localization signal signature appears at 362-364 (KRK). 2 consecutive C2H2 AKAP95-type zinc fingers follow at residues 391–413 (CSLC…SKFH) and 484–507 (CAAC…TMDH). The segment at 545-646 (GENPFTDSPE…DDEEGGGGAP (102 aa)) is disordered. At Ser-552 the chain carries Phosphoserine. Positions 552 to 563 (SPEEEKEQEEAE) are enriched in acidic residues. Residues 564-586 (GGALDEGAQGEAAGISEGAEGVP) show a composition bias toward low complexity. Positions 587-607 (AQPPVPPEPAPGAVSPPPPPP) are enriched in pro residues. Positions 634 to 646 (DVEDDEEGGGGAP) are enriched in acidic residues.

It belongs to the AKAP95 family. Interacts (via N-terminus) with DHX9 (via RGG region). Interacts with TMPO isoform Beta, PRPF40A, RNF43, lamin-B. Interacts with HDAC3; increased during mitosis. Interacts with EBV EBNA-LP. Interacts with HIV-1 reverse transcriptase/ribonuclease H. Post-translationally, phosphorylated on serine or threonine residues possibly by PKA; probably modulating the interaction with TMPO isoform Beta. In terms of tissue distribution, ubiquitously expressed. Expressed in the brain cortex (at protein level).

The protein resides in the nucleus. The protein localises to the nucleus matrix. Its subcellular location is the nucleus speckle. It localises to the PML body. It is found in the cytoplasm. In terms of biological role, could play a role in constitutive transport element (CTE)-mediated gene expression by association with DHX9. Increases CTE-dependent nuclear unspliced mRNA export. Proposed to target PRKACA to the nucleus but does not seem to be implicated in the binding of regulatory subunit II of PKA. May be involved in nuclear envelope breakdown and chromatin condensation. May be involved in anchoring nuclear membranes to chromatin in interphase and in releasing membranes from chromating at mitosis. May regulate the initiation phase of DNA replication when associated with TMPO isoform Beta. Required for cell cycle G2/M transition and histone deacetylation during mitosis. In mitotic cells recruits HDAC3 to the vicinity of chromatin leading to deacetylation and subsequent phosphorylation at 'Ser-10' of histone H3; in this function seems to act redundantly with AKAP8. May be involved in regulation of pre-mRNA splicing. Its function is as follows. (Microbial infection) In case of EBV infection, may target PRKACA to EBNA-LP-containing nuclear sites to modulate transcription from specific promoters. (Microbial infection) Can synergize with DHX9 to activate the CTE-mediated gene expression of type D retroviruses. Functionally, (Microbial infection) In case of HIV-1 infection, involved in the DHX9-promoted annealing of host tRNA(Lys3) to viral genomic RNA as a primer in reverse transcription; in vitro negatively regulates DHX9 annealing activity. This chain is A-kinase anchor protein 8-like (AKAP8L), found in Homo sapiens (Human).